Consider the following 739-residue polypeptide: Phosphoribosylformylglycinamidine synthase subunit PurL (739 aa).

H52 is an active-site residue. 2 residues coordinate ATP: Y55 and K94. E96 contacts Mg(2+). Substrate contacts are provided by residues 97–100 (SHNH) and R119. H98 acts as the Proton acceptor in catalysis. D120 provides a ligand contact to Mg(2+). Q243 is a substrate binding site. D271 provides a ligand contact to Mg(2+). 315-317 (ESQ) is a binding site for substrate. ATP contacts are provided by D498 and G535. Residue N536 participates in Mg(2+) binding. S538 lines the substrate pocket.

This sequence belongs to the FGAMS family. In terms of assembly, monomer. Part of the FGAM synthase complex composed of 1 PurL, 1 PurQ and 2 PurS subunits.

The protein resides in the cytoplasm. The catalysed reaction is N(2)-formyl-N(1)-(5-phospho-beta-D-ribosyl)glycinamide + L-glutamine + ATP + H2O = 2-formamido-N(1)-(5-O-phospho-beta-D-ribosyl)acetamidine + L-glutamate + ADP + phosphate + H(+). Its pathway is purine metabolism; IMP biosynthesis via de novo pathway; 5-amino-1-(5-phospho-D-ribosyl)imidazole from N(2)-formyl-N(1)-(5-phospho-D-ribosyl)glycinamide: step 1/2. Part of the phosphoribosylformylglycinamidine synthase complex involved in the purines biosynthetic pathway. Catalyzes the ATP-dependent conversion of formylglycinamide ribonucleotide (FGAR) and glutamine to yield formylglycinamidine ribonucleotide (FGAM) and glutamate. The FGAM synthase complex is composed of three subunits. PurQ produces an ammonia molecule by converting glutamine to glutamate. PurL transfers the ammonia molecule to FGAR to form FGAM in an ATP-dependent manner. PurS interacts with PurQ and PurL and is thought to assist in the transfer of the ammonia molecule from PurQ to PurL. The chain is Phosphoribosylformylglycinamidine synthase subunit PurL from Caulobacter vibrioides (strain ATCC 19089 / CIP 103742 / CB 15) (Caulobacter crescentus).